The following is a 348-amino-acid chain: MGNKIISMMKKDSKDGGGGGSKSKRMNRSQRKLLADEEMLHRRALSMAIHQAQLSQRFDGSMSRRVGSTSTRKRTLSDPFSNGKQVPDFSESLIVKKFVLVHGEGFGAWCWYKMVASLEESGLSPVTVDLTGCGFNMTDTNTVSTLEEYSKPLIDLLENLPEEEKVILVGHSTGGASISYALERFPEKISKAIFVCATMVSDGQRPFDVFSEELGSAERFMKESQFLIYGNGKDKPPTGFMFEKPHMKGLYFNQSPNKDIALAMISMRPVPLGPMMEKVSLTAERYGKGRRFYVQTLDDRALSPDVQEKLVRENSPEGVFKIKGSDHCPFFSKPQSLHKILLEIAQIP.

Disordered stretches follow at residues 1–29 (MGNK…MNRS) and 60–80 (GSMS…SDPF). A chloroplast-targeting transit peptide spans 1 to 76 (MGNKIISMMK…GSTSTRKRTL (76 aa)). Phosphoserine is present on Ser77. Ser172 serves as the catalytic Acyl-ester intermediate. Active-site charge relay system residues include Asp299 and His327.

Belongs to the AB hydrolase superfamily. Methylesterase family.

It localises to the plastid. Its subcellular location is the chloroplast. Its function is as follows. Putative methylesterase. The sequence is that of Putative methylesterase 14, chloroplastic from Arabidopsis thaliana (Mouse-ear cress).